Here is a 116-residue protein sequence, read N- to C-terminus: Iron-sulfur cluster assembly protein CyaY (116 aa).

This sequence belongs to the frataxin family.

Involved in iron-sulfur (Fe-S) cluster assembly. May act as a regulator of Fe-S biogenesis. This is Iron-sulfur cluster assembly protein CyaY from Buchnera aphidicola subsp. Acyrthosiphon pisum (strain APS) (Acyrthosiphon pisum symbiotic bacterium).